A 96-amino-acid polypeptide reads, in one-letter code: Putative pterin-4-alpha-carbinolamine dehydratase (96 aa).

It belongs to the pterin-4-alpha-carbinolamine dehydratase family.

It catalyses the reaction (4aS,6R)-4a-hydroxy-L-erythro-5,6,7,8-tetrahydrobiopterin = (6R)-L-erythro-6,7-dihydrobiopterin + H2O. In Prochlorococcus marinus (strain MIT 9515), this protein is Putative pterin-4-alpha-carbinolamine dehydratase.